The following is a 132-amino-acid chain: Small ribosomal subunit protein uS8 (132 aa).

It belongs to the universal ribosomal protein uS8 family. As to quaternary structure, part of the 30S ribosomal subunit. Contacts proteins S5 and S12.

Functionally, one of the primary rRNA binding proteins, it binds directly to 16S rRNA central domain where it helps coordinate assembly of the platform of the 30S subunit. The chain is Small ribosomal subunit protein uS8 from Corynebacterium glutamicum (strain R).